The sequence spans 253 residues: Major prion protein (253 aa).

The N-terminal stretch at M1–C22 is a signal peptide. Positions K23 to S230 are interaction with GRB2, ERI3 and SYN1. The segment at P26–S108 is disordered. 5 consecutive repeat copies span residues P51–Q59, P60–Q67, P68–Q75, P76–Q83, and P84–Q91. Positions P51–Q91 are 5 X 8 AA tandem repeats of P-H-G-G-G-W-G-Q. Residues Q52 to T95 are compositionally biased toward gly residues. Cu(2+) contacts are provided by H61, G62, G63, H69, G70, G71, H77, G78, G79, H85, G86, and G87. C179 and C214 are joined by a disulfide. 2 N-linked (GlcNAc...) asparagine glycosylation sites follow: N181 and N197. The GPI-anchor amidated serine moiety is linked to residue S230. The propeptide at S231–G253 is removed in mature form.

The protein belongs to the prion family. In terms of assembly, monomer and homodimer. Has a tendency to aggregate into amyloid fibrils containing a cross-beta spine, formed by a steric zipper of superposed beta-strands. Soluble oligomers may represent an intermediate stage on the path to fibril formation. Copper binding may promote oligomerization. Interacts with GRB2, APP, ERI3/PRNPIP and SYN1. Mislocalized cytosolically exposed PrP interacts with MGRN1; this interaction alters MGRN1 subcellular location and causes lysosomal enlargement. Interacts with KIAA1191.

The protein resides in the cell membrane. It is found in the golgi apparatus. Its primary physiological function is unclear. Has cytoprotective activity against internal or environmental stresses. May play a role in neuronal development and synaptic plasticity. May be required for neuronal myelin sheath maintenance. May play a role in iron uptake and iron homeostasis. Soluble oligomers are toxic to cultured neuroblastoma cells and induce apoptosis (in vitro). Association with GPC1 (via its heparan sulfate chains) targets PRNP to lipid rafts. Also provides Cu(2+) or Zn(2+) for the ascorbate-mediated GPC1 deaminase degradation of its heparan sulfate side chains. This chain is Major prion protein (PRNP), found in Trachypithecus francoisi (Francois' leaf monkey).